A 381-amino-acid polypeptide reads, in one-letter code: uncharacterized protein (381 aa).

It belongs to the glycerate kinase type-1 family.

This is an uncharacterized protein from Mycobacterium tuberculosis (strain CDC 1551 / Oshkosh).